A 212-amino-acid chain; its full sequence is KxDL motif-containing protein CG10681 (212 aa).

Residues 128-159 form a disordered region; sequence RSSLAEEAEDDTEAQAKKTAETPAPAAAKPVL. The span at 148–157 shows a compositional bias: low complexity; the sequence is ETPAPAAAKP.

The protein belongs to the KXD1 family.

The polypeptide is KxDL motif-containing protein CG10681 (Drosophila melanogaster (Fruit fly)).